The primary structure comprises 121 residues: Ribosome-binding factor A (121 aa).

This sequence belongs to the RbfA family. As to quaternary structure, monomer. Binds 30S ribosomal subunits, but not 50S ribosomal subunits or 70S ribosomes.

It is found in the cytoplasm. Functionally, one of several proteins that assist in the late maturation steps of the functional core of the 30S ribosomal subunit. Associates with free 30S ribosomal subunits (but not with 30S subunits that are part of 70S ribosomes or polysomes). Required for efficient processing of 16S rRNA. May interact with the 5'-terminal helix region of 16S rRNA. The sequence is that of Ribosome-binding factor A from Finegoldia magna (strain ATCC 29328 / DSM 20472 / WAL 2508) (Peptostreptococcus magnus).